The chain runs to 212 residues: ATP-dependent dethiobiotin synthetase BioD (212 aa).

12-17 contributes to the ATP binding site; sequence DCGKTF. Residue threonine 16 participates in Mg(2+) binding. Lysine 33 is an active-site residue. Substrate is bound at residue serine 37. Residues aspartate 50, 110-113, and 170-171 each bind ATP; these read EGAG and NC. Positions 50 and 110 each coordinate Mg(2+).

It belongs to the dethiobiotin synthetase family. In terms of assembly, homodimer. Mg(2+) is required as a cofactor.

The protein resides in the cytoplasm. It carries out the reaction (7R,8S)-7,8-diammoniononanoate + CO2 + ATP = (4R,5S)-dethiobiotin + ADP + phosphate + 3 H(+). It functions in the pathway cofactor biosynthesis; biotin biosynthesis; biotin from 7,8-diaminononanoate: step 1/2. Catalyzes a mechanistically unusual reaction, the ATP-dependent insertion of CO2 between the N7 and N8 nitrogen atoms of 7,8-diaminopelargonic acid (DAPA, also called 7,8-diammoniononanoate) to form a ureido ring. The protein is ATP-dependent dethiobiotin synthetase BioD of Legionella pneumophila (strain Lens).